We begin with the raw amino-acid sequence, 304 residues long: 2-oxoacid:ferredoxin oxidoreductase 2, subunit beta (304 aa).

[4Fe-4S] cluster is bound by residues Cys-12, Cys-15, and Cys-46. Thiamine diphosphate-binding positions include 44 to 47 and His-65; that span reads IGCS. Asp-90 is a binding site for Mg(2+). 91-92 lines the thiamine diphosphate pocket; it reads GD. 2 residues coordinate Mg(2+): Asn-118 and Val-120. 122–123 is a thiamine diphosphate binding site; that stretch reads GL. Cys-197 lines the [4Fe-4S] cluster pocket.

In terms of assembly, heterodimer composed of an alpha and a beta subunit. Requires [4Fe-4S] cluster as cofactor. Thiamine diphosphate serves as cofactor. The cofactor is Mg(2+).

The enzyme catalyses a 2-oxocarboxylate + 2 oxidized [2Fe-2S]-[ferredoxin] + CoA = an acyl-CoA + 2 reduced [2Fe-2S]-[ferredoxin] + CO2 + H(+). Its function is as follows. Catalyzes the coenzyme A-dependent oxidative decarboxylation of different 2-oxoacids such as 2-oxoglutarate, pyruvate and 2-oxobutyrate to form their CoA derivatives. The protein is 2-oxoacid:ferredoxin oxidoreductase 2, subunit beta of Sulfurisphaera tokodaii (strain DSM 16993 / JCM 10545 / NBRC 100140 / 7) (Sulfolobus tokodaii).